The chain runs to 807 residues: cAMP-regulated phosphoprotein 21 (807 aa).

Positions 1–127 (MSEQGGLTPT…KNREKLSERP (127 aa)) are disordered. S2 is modified (N-acetylserine). Residue S32 is modified to Phosphoserine. Residues 32–57 (SLDEEEKLELQRRLAAQNQERRKSKS) are a coiled coil. S55 is modified (phosphoserine; by PKA). Polar residues predominate over residues 89–98 (IHLQLSSFPS). Residues 101–127 (EEDKSRKDDSEREKEKDKNREKLSERP) show a composition bias toward basic and acidic residues. S133 is subject to Phosphoserine. The 64-residue stretch at 163–226 (RMILLKMEQE…SVIINKTSST (64 aa)) folds into the R3H domain. The 72-residue stretch at 227 to 298 (RIPEQRFCEH…VRERIFAHDS (72 aa)) folds into the SUZ domain. Residues 245 to 282 (SQKRFILKRDNSSIDKEDNQNRMHPFRDDRRSKSIEER) are disordered. N265 and S298 each carry phosphoserine. Disordered regions lie at residues 328–434 (LFRA…TSSV), 474–536 (GSIL…QPQM), 552–576 (SQLSMSRQSSGDTPEPPSGTVYPAS), and 595–627 (QLSTGGFSDSGPPISQQVLQAPPSPQGFVQQPP). The segment covering 337-348 (GRTSGSRQSSSE) has biased composition (low complexity). Positions 349 to 358 (TELRWPDHQR) are enriched in basic and acidic residues. Residues 359–380 (AWSSTDSDSSNRNLKPTMTKTA) are compositionally biased toward polar residues. S361 and S381 each carry phosphoserine. Positions 401–421 (GKLSKTGSESSSSAGSSGSLS) are enriched in low complexity. The segment covering 422-434 (RTHPQSTALTSSV) has biased composition (polar residues). Positions 514–524 (QQPPQQQPSPQ) are enriched in pro residues. Over residues 525–535 (PQQQVQASQPQ) the composition is skewed to low complexity. Composition is skewed to polar residues over residues 552 to 563 (SQLSMSRQSSGD) and 595 to 613 (QLSTGGFSDSGPPISQQVL). At S557 the chain carries Phosphoserine. R650 carries the asymmetric dimethylarginine modification.

As to quaternary structure, interacts with CALM1. In terms of processing, phosphorylation of isoform 2 at Ser-55 is enhanced upon dopamine D1 receptor activation and favors interaction with CALM1. Post-translationally, methylated by CARM1 at Arg-650 in immature thymocytes. Present at high levels in thymus and low levels in brain. In thymus, isoform 1 is specifically found in immature thymocytes (at protein level).

It is found in the cytoplasm. Its function is as follows. May act as a competitive inhibitor of calmodulin-dependent enzymes such as calcineurin in neurons. The sequence is that of cAMP-regulated phosphoprotein 21 (Arpp21) from Mus musculus (Mouse).